We begin with the raw amino-acid sequence, 372 residues long: Pristinol synthase (372 aa).

Basic and acidic residues predominate over residues 1–12 (MAHETTSGRRLP). The tract at residues 1–23 (MAHETTSGRRLPDPTSPSDPTRR) is disordered. Positions 100 and 104 each coordinate Mg(2+). Positions 100–104 (DDQFD) match the DDXXD motif motif. Arg197 is a binding site for substrate. Mg(2+) contacts are provided by Asn243 and Ser247. A substrate-binding site is contributed by Lys250. A Mg(2+)-binding site is contributed by Glu251. Residue 337 to 338 (RY) participates in substrate binding. Residues 349-372 (GRRRPWDGLTTATGTASPRHPRRA) are disordered.

It belongs to the terpene synthase family. Requires Mg(2+) as cofactor.

It carries out the reaction (2E,6E)-farnesyl diphosphate + H2O = (+)-(2S,3R,9R)-pristinol + diphosphate. It participates in secondary metabolite biosynthesis; terpenoid biosynthesis. In terms of biological role, catalyzes the conversion of (2E,6E)-farnesyl diphosphate (FPP) to yield a new 5-8 bicyclic (pristinane) sesquiterpenol (+)-(2S,3R,9R)-pristinol via a 1,11-cyclization, which requires the abstraction of the pyrophosphate from FPP to yield the humulyl cation. The only accepted substrate is farnesyl diphosphate (FPP). The polypeptide is Pristinol synthase (Streptomyces pristinaespiralis (strain ATCC 25486 / DSM 40338 / CBS 914.69 / JCM 4507 / KCC S-0507 / NBRC 13074 / NRRL 2958 / 5647)).